The sequence spans 282 residues: tRNA (guanine-N(1)-)-methyltransferase (282 aa).

Residues glycine 157 and 177 to 182 (VGDYIL) each bind S-adenosyl-L-methionine.

Belongs to the RNA methyltransferase TrmD family. Homodimer.

The protein localises to the cytoplasm. It carries out the reaction guanosine(37) in tRNA + S-adenosyl-L-methionine = N(1)-methylguanosine(37) in tRNA + S-adenosyl-L-homocysteine + H(+). Specifically methylates guanosine-37 in various tRNAs. The polypeptide is tRNA (guanine-N(1)-)-methyltransferase (Rickettsia bellii (strain RML369-C)).